Reading from the N-terminus, the 296-residue chain is Glycine--tRNA ligase alpha subunit (296 aa).

The protein belongs to the class-II aminoacyl-tRNA synthetase family. As to quaternary structure, tetramer of two alpha and two beta subunits.

The protein localises to the cytoplasm. The catalysed reaction is tRNA(Gly) + glycine + ATP = glycyl-tRNA(Gly) + AMP + diphosphate. This chain is Glycine--tRNA ligase alpha subunit, found in Francisella tularensis subsp. holarctica (strain FTNF002-00 / FTA).